A 274-amino-acid chain; its full sequence is MNKTAIALLALLASSASLAATPWQKITQPVPGSAQSIGSFSNGCIVGADTLPIQSEHYQVMRTDQRRYFGHPDLVMFIQRLSSQVSNLGMGTVLIGDMGMPAGGRFNGGHASHQTGLDVDIFLQLPKTRWTSAQLLRPQALDLVSRDGKHVVSTLWKPEIFSLIKLAAQDKDVTRIFVNPAIKQQLCLDAGTDRDWLRKVRPWFQHRAHMHVRLRCPADSLECEDQPLPPPGDGCGAELQSWFAPPKPGTTKPEKKTPSPLPPSCQALLDEHVI.

Positions 1 to 19 (MNKTAIALLALLASSASLA) are cleaved as a signal peptide. 3 disulfides stabilise this stretch: Cys44–Cys265, Cys187–Cys235, and Cys216–Cys223. Positions 110, 113, 120, 147, 150, and 211 each coordinate Zn(2+). The interval 228 to 264 (LPPPGDGCGAELQSWFAPPKPGTTKPEKKTPSPLPPS) is disordered.

The protein belongs to the peptidase M74 family. As to quaternary structure, dimer. It depends on Zn(2+) as a cofactor.

The protein localises to the periplasm. Murein endopeptidase that cleaves the D-alanyl-meso-2,6-diamino-pimelyl amide bond that connects peptidoglycan strands. Likely plays a role in the removal of murein from the sacculus. The polypeptide is Penicillin-insensitive murein endopeptidase (Escherichia coli (strain 55989 / EAEC)).